The chain runs to 219 residues: Proteasome subunit beta (219 aa).

Residues 1–14 (MISNSEYHKEYMKG) constitute a propeptide, removed in mature form; by autocatalysis. Thr15 serves as the catalytic Nucleophile.

It belongs to the peptidase T1B family. The 20S proteasome core is composed of 14 alpha and 14 beta subunits that assemble into four stacked heptameric rings, resulting in a barrel-shaped structure. The two inner rings, each composed of seven catalytic beta subunits, are sandwiched by two outer rings, each composed of seven alpha subunits. The catalytic chamber with the active sites is on the inside of the barrel. Has a gated structure, the ends of the cylinder being occluded by the N-termini of the alpha-subunits. Is capped at one or both ends by the proteasome regulatory ATPase, PAN.

The protein localises to the cytoplasm. It catalyses the reaction Cleavage of peptide bonds with very broad specificity.. With respect to regulation, the formation of the proteasomal ATPase PAN-20S proteasome complex, via the docking of the C-termini of PAN into the intersubunit pockets in the alpha-rings, triggers opening of the gate for substrate entry. Interconversion between the open-gate and close-gate conformations leads to a dynamic regulation of the 20S proteasome proteolysis activity. In terms of biological role, component of the proteasome core, a large protease complex with broad specificity involved in protein degradation. The polypeptide is Proteasome subunit beta (Methanococcus maripaludis (strain C5 / ATCC BAA-1333)).